The primary structure comprises 569 residues: Pyrophosphate--fructose 6-phosphate 1-phosphotransferase subunit beta (569 aa).

Position 107 (G107) interacts with diphosphate. Position 201 (D201) interacts with Mg(2+). Substrate is bound by residues 229–231 (TID), 268–269 (KY), 276–278 (MGR), E337, and 442–445 (YEGR). Residue D231 is the Proton acceptor of the active site.

It belongs to the phosphofructokinase type A (PFKA) family. PPi-dependent PFK group II subfamily. Clade 'Long' sub-subfamily. In terms of assembly, tetramer of two alpha (regulatory) and two beta (catalytic) chains. It depends on Mg(2+) as a cofactor.

It is found in the cytoplasm. The enzyme catalyses beta-D-fructose 6-phosphate + diphosphate = beta-D-fructose 1,6-bisphosphate + phosphate + H(+). Its pathway is carbohydrate degradation; glycolysis; D-glyceraldehyde 3-phosphate and glycerone phosphate from D-glucose: step 3/4. Allosterically activated by fructose 2,6-bisphosphate. Functionally, catalytic subunit of pyrophosphate--fructose 6-phosphate 1-phosphotransferase. Catalyzes the phosphorylation of D-fructose 6-phosphate, the first committing step of glycolysis. Uses inorganic phosphate (PPi) as phosphoryl donor instead of ATP like common ATP-dependent phosphofructokinases (ATP-PFKs), which renders the reaction reversible, and can thus function both in glycolysis and gluconeogenesis. This is Pyrophosphate--fructose 6-phosphate 1-phosphotransferase subunit beta from Solanum tuberosum (Potato).